The primary structure comprises 304 residues: tRNA dimethylallyltransferase (304 aa).

10–17 (GPTASGKT) serves as a coordination point for ATP. 12-17 (TASGKT) serves as a coordination point for substrate. 3 interaction with substrate tRNA regions span residues 35 to 38 (DSAL), 159 to 163 (QRLSR), and 240 to 245 (RCVGYR).

The protein belongs to the IPP transferase family. In terms of assembly, monomer. Requires Mg(2+) as cofactor.

It carries out the reaction adenosine(37) in tRNA + dimethylallyl diphosphate = N(6)-dimethylallyladenosine(37) in tRNA + diphosphate. Its function is as follows. Catalyzes the transfer of a dimethylallyl group onto the adenine at position 37 in tRNAs that read codons beginning with uridine, leading to the formation of N6-(dimethylallyl)adenosine (i(6)A). This Shewanella sp. (strain W3-18-1) protein is tRNA dimethylallyltransferase.